A 248-amino-acid polypeptide reads, in one-letter code: Ubiquinone biosynthesis O-methyltransferase (248 aa).

Positions 41, 72, 93, and 136 each coordinate S-adenosyl-L-methionine.

Belongs to the methyltransferase superfamily. UbiG/COQ3 family.

The catalysed reaction is a 3-demethylubiquinol + S-adenosyl-L-methionine = a ubiquinol + S-adenosyl-L-homocysteine + H(+). It catalyses the reaction a 3-(all-trans-polyprenyl)benzene-1,2-diol + S-adenosyl-L-methionine = a 2-methoxy-6-(all-trans-polyprenyl)phenol + S-adenosyl-L-homocysteine + H(+). The protein operates within cofactor biosynthesis; ubiquinone biosynthesis. O-methyltransferase that catalyzes the 2 O-methylation steps in the ubiquinone biosynthetic pathway. The protein is Ubiquinone biosynthesis O-methyltransferase of Rhizobium etli (strain CIAT 652).